Reading from the N-terminus, the 101-residue chain is Small ribosomal subunit protein uS14 (101 aa).

It belongs to the universal ribosomal protein uS14 family. In terms of assembly, part of the 30S ribosomal subunit. Contacts proteins S3 and S10.

Its function is as follows. Binds 16S rRNA, required for the assembly of 30S particles and may also be responsible for determining the conformation of the 16S rRNA at the A site. This is Small ribosomal subunit protein uS14 from Aromatoleum aromaticum (strain DSM 19018 / LMG 30748 / EbN1) (Azoarcus sp. (strain EbN1)).